The chain runs to 187 residues: UPF0301 protein Noc_0368 (187 aa).

The protein belongs to the UPF0301 (AlgH) family.

The sequence is that of UPF0301 protein Noc_0368 from Nitrosococcus oceani (strain ATCC 19707 / BCRC 17464 / JCM 30415 / NCIMB 11848 / C-107).